The primary structure comprises 396 residues: MTRLNPYFGEFGGMYVPQILMPALIQLEDAFVSAQSDPAFQAEFSDLLTNYAGRPTPLTLCRNLTAGTRTKLYLKREDLLHGGAHKTNQVLGQALLAKRMGKTEIIAETGAGQHGVASALSSALLGLKCRIYMGAKDIERQSPNVFRMRLMGAEVIPVHSGSSTLKDACNEALRDWSDSYERAHYMLGTAAGPHPFPTIVREFQRMIGEETRAQLQEHEQRLPDAVIACVGGGSNAIGMFADFIDEPAVRLIGVEPGGLGIETRQHGASLKHGRTGIYFGMKSPMMQSAEGQIEESYSISAGLDFPSVGPQHAYLDSIGRAEYISATDEEALDAFRRLSRHEGIIPALESSHALAHALRMIQAEPEKEQILVVNLSGRGDKDIFTVHDILKARGDI.

K86 bears the N6-(pyridoxal phosphate)lysine mark.

The protein belongs to the TrpB family. Tetramer of two alpha and two beta chains. It depends on pyridoxal 5'-phosphate as a cofactor.

It carries out the reaction (1S,2R)-1-C-(indol-3-yl)glycerol 3-phosphate + L-serine = D-glyceraldehyde 3-phosphate + L-tryptophan + H2O. The protein operates within amino-acid biosynthesis; L-tryptophan biosynthesis; L-tryptophan from chorismate: step 5/5. Its function is as follows. The beta subunit is responsible for the synthesis of L-tryptophan from indole and L-serine. In Sodalis glossinidius (strain morsitans), this protein is Tryptophan synthase beta chain.